Consider the following 280-residue polypeptide: Serine protease 33 (280 aa).

Residues M1–G22 form the signal peptide. One can recognise a Peptidase S1 domain in the interval I37 to S279. C62 and C78 are disulfide-bonded. Catalysis depends on charge relay system residues H77 and D126. Disulfide bonds link C160-C237, C193-C216, and C227-C255. S231 acts as the Charge relay system in catalysis.

This sequence belongs to the peptidase S1 family. In terms of tissue distribution, predominantly expressed in macrophages. Present in the spleen, small and large intestine, lung and brain (at protein level). Highly expressed in peripheral leukocytes, ovary, retina, spleen and stomach. Moderately expressed in thymus, uterus and platelets, as well as some brain tissues, such as thalamus and fetal brain.

It localises to the secreted. Serine protease that has amidolytic activity, cleaving its substrates before Arg residues. This chain is Serine protease 33 (PRSS33), found in Homo sapiens (Human).